A 580-amino-acid polypeptide reads, in one-letter code: Arginine--tRNA ligase (580 aa).

The 'HIGH' region motif lies at 137–147 (ANPTGPLHIGH).

It belongs to the class-I aminoacyl-tRNA synthetase family. Monomer.

The protein localises to the cytoplasm. The catalysed reaction is tRNA(Arg) + L-arginine + ATP = L-arginyl-tRNA(Arg) + AMP + diphosphate. This is Arginine--tRNA ligase from Anaplasma phagocytophilum (strain HZ).